The following is a 294-amino-acid chain: Cuticle collagen 144 (294 aa).

A signal peptide spans 1-30 (MEKILVTISTGAASFAVLAVLFTIPSLYNT). Residues 100–112 (TCPPGPPGPPGQP) show a composition bias toward pro residues. Disordered stretches follow at residues 100–134 (TCPP…TYAP) and 148–278 (PQGP…GNDA). Triple-helical region regions lie at residues 102-127 (PPGP…KGED) and 153-274 (GPEG…PGLP). Composition is skewed to low complexity over residues 164–209 (AGPD…PGQD) and 219–265 (APGA…DGQP).

Collagen polypeptide chains are complexed within the cuticle by disulfide bonds and other types of covalent cross-links.

Functionally, nematode cuticles are composed largely of collagen-like proteins. The cuticle functions both as an exoskeleton and as a barrier to protect the worm from its environment. This Caenorhabditis briggsae protein is Cuticle collagen 144.